Consider the following 86-residue polypeptide: uncharacterized protein (86 aa).

In terms of tissue distribution, retina-specific.

This is an uncharacterized protein from Homo sapiens (Human).